Reading from the N-terminus, the 131-residue chain is Interleukin-13 (131 aa).

The signal sequence occupies residues 1–18 (MALWVTAVLALACLGGLA). Residues N42, N53, N76, and N121 are each glycosylated (N-linked (GlcNAc...) asparagine). 2 disulfide bridges follow: C52–C80 and C68–C94.

It belongs to the IL-4/IL-13 family. As to quaternary structure, interacts with IL13RA2.

It is found in the secreted. Cytokine that plays important roles in allergic inflammation and immune response to parasite infection. Synergizes with IL2 in regulating interferon-gamma synthesis. Stimulates B-cell proliferation, and activation of eosinophils, basophils, and mast cells. Plays an important role in controlling IL33 activity by modulating the production of transmembrane and soluble forms of interleukin-1 receptor-like 1/IL1RL1. Displays the capacity to antagonize Th1-driven proinflammatory immune response and downregulates synthesis of many proinflammatory cytokines including IL1, IL6, IL10, IL12 and TNF-alpha through a mechanism that partially involves suppression of NF-kappa-B. Also functions on nonhematopoietic cells, including endothelial cells where it induces vascular cell adhesion protein 1/VCAM1, which is important in the recruitment of eosinophils. Exerts its biological effects through its receptors which comprises the IL4R chain and the IL13RA1 chain, to activate JAK1 and TYK2, leading to the activation of STAT6. Aside from IL13RA1, another receptor IL13RA2 acts as a high affinity decoy for IL13 and mediates internalization and depletion of extracellular IL13. In Rattus norvegicus (Rat), this protein is Interleukin-13 (Il13).